We begin with the raw amino-acid sequence, 258 residues long: Type III pantothenate kinase (258 aa).

9–16 (DIGNTSVN) contributes to the ATP binding site. 110–113 (GADR) serves as a coordination point for substrate. The Proton acceptor role is filled by Asp112. Asp132 is a K(+) binding site. Thr135 provides a ligand contact to ATP. Thr187 contacts substrate.

The protein belongs to the type III pantothenate kinase family. In terms of assembly, homodimer. NH4(+) serves as cofactor. It depends on K(+) as a cofactor.

The protein resides in the cytoplasm. It catalyses the reaction (R)-pantothenate + ATP = (R)-4'-phosphopantothenate + ADP + H(+). The protein operates within cofactor biosynthesis; coenzyme A biosynthesis; CoA from (R)-pantothenate: step 1/5. Catalyzes the phosphorylation of pantothenate (Pan), the first step in CoA biosynthesis. This is Type III pantothenate kinase from Dehalococcoides mccartyi (strain ATCC BAA-2266 / KCTC 15142 / 195) (Dehalococcoides ethenogenes (strain 195)).